Reading from the N-terminus, the 708-residue chain is DNA ligase (708 aa).

NAD(+)-binding positions include 35–39 (DADYD), 84–85 (SL), and glutamate 118. The active-site N6-AMP-lysine intermediate is lysine 120. NAD(+) contacts are provided by arginine 141, glutamate 182, lysine 303, and lysine 327. Residues cysteine 419, cysteine 422, cysteine 437, and cysteine 443 each contribute to the Zn(2+) site. The 81-residue stretch at 628–708 (TRASEVSGKT…GWAKIVADAQ (81 aa)) folds into the BRCT domain.

This sequence belongs to the NAD-dependent DNA ligase family. LigA subfamily. The cofactor is Mg(2+). Mn(2+) is required as a cofactor.

It catalyses the reaction NAD(+) + (deoxyribonucleotide)n-3'-hydroxyl + 5'-phospho-(deoxyribonucleotide)m = (deoxyribonucleotide)n+m + AMP + beta-nicotinamide D-nucleotide.. Its function is as follows. DNA ligase that catalyzes the formation of phosphodiester linkages between 5'-phosphoryl and 3'-hydroxyl groups in double-stranded DNA using NAD as a coenzyme and as the energy source for the reaction. It is essential for DNA replication and repair of damaged DNA. The chain is DNA ligase from Rhizorhabdus wittichii (strain DSM 6014 / CCUG 31198 / JCM 15750 / NBRC 105917 / EY 4224 / RW1) (Sphingomonas wittichii).